The sequence spans 1000 residues: C-module-binding factor A (1000 aa).

A JmjC domain is found at 113–280; it reads PREWQEYLSH…ISYFSSLPHT (168 aa). Residues 489–544 form a PHD-type; atypical zinc finger; the sequence is KIKCHRCEKRFKKFSIIFCTNCNARFCEQCVVNTFGQNFQVLMKRNEWECFCCKGL. The RING-type; degenerate zinc finger occupies 492–542; sequence CHRCEKRFKKFSIIFCTNCNARFCEQCVVNTFGQNFQVLMKRNEWECFCCK. 2 disordered regions span residues 561–647 and 660–818; these read RILN…SSYS and SYGS…KNLK. Low complexity-rich tracts occupy residues 574 to 647, 660 to 683, 700 to 710, 732 to 751, and 760 to 789; these read NNNN…SSYS, SYGSYDNYNNNNNNNNYNNNNNNN, SSSSGSGSSNS, NNNNNNNHHNNNNNNNNNHH, and NNNNNNNNNNPTTSSLSSLSTSLSSSSTST. Positions 805 to 818 are enriched in basic and acidic residues; that stretch reads DNDKPKGRPPKNLK. A DNA-binding region (a.T hook) is located at residues 810-818; that stretch reads KGRPPKNLK.

Monomer.

It localises to the nucleus. In terms of biological role, transcriptional regulator involved in phagocytosis and pinocytosis. Both activates and represses transcription. Regulates expression of acaA, carA, pkaC, csaA, cotB and lagC. Promotes amplification of the tRNA gene-associated retrotransposon TRE5-A, a mobile genetic element formerly called as Dictyostelium repetitive element (DRE). Suppresses agnC and agnE encoding argonaute proteins which are part of a RNA interference pathway controlling TRE5-A amplification. Required for amplification of both sense and antisense RNA transcripts, but does not activate their promoters found in A-module and C-module of the TRE5-A, respectively. Nevertheless, binds to distinct DNA sequences containing A and T stretches within the C-module in vitro. The protein is C-module-binding factor A of Dictyostelium discoideum (Social amoeba).